The primary structure comprises 340 residues: MNPSSLVLNGLTSYFENGRARVVPPVGRNILGVVNYASVCEYPTLDHGYPELEINMVAPTAEPFAEVWVTDAESEHGERDGITYAHDGEYFFCAGRVPPTGRYTEATRAAYVTMFELLEEFGYSSVFRMWNFIGDINRDNAEGMEVYRDFCRGRAEAFEQCRLEFDQFPAATGIGSRGGGIAFYLLACRSGGHVHIENPRQVPAYHYPKRYGPRAPRFARATYLPSRAADGVGGQVFVSGTASVLGHETAHEGDLVKQCRLALENIELVISGGNLAAHGISAGHGLTALRNIKVYVRRSEDVPAVREICREAFSPDADIVYLTVDVCRSDLLVEIEGVVM.

Substrate is bound by residues Tyr147, Arg154, Tyr207, and Arg220. The active-site Proton acceptor is the Glu334.

The protein belongs to the FkbO/Hyg5 family. As to quaternary structure, trimer.

It catalyses the reaction chorismate = 3-hydroxybenzoate + pyruvate. Involved in the biosynthesis of BC325, a rapamycin analog containing a 3-hydroxybenzoate starter unit. Catalyzes the hydrolysis of chorismate via an intramolecular mechanism to yield 3-hydroxybenzoate (3HBA). This is 3-hydroxybenzoate synthase from Streptomyces hygroscopicus.